Here is a 465-residue protein sequence, read N- to C-terminus: VGFKAGVKDYKLTYYTPDYETKATDILAAFRVTPQPGVPPEEAGAAVAAESSTGTWTTVWTDGLTSLDRYKGRCYHIEPVAGEENQYIAYVAYPLDLFEEGSVTNMFTSIVGNVFGFKALRALRLEDLRIPPAYSKTFQGPPHGIQVERDKLNKYGRPLLGCTIKPKLGLSAKNYGRAVYECLRGGLDFTKDDENVNSQPFMRWRDRFLFCAEAIYKAQAETGEIKGHYLNATAGTWEEMIKRAVFARELGVPIVMHDYLTGGFTANTSLAHYCRDNGLLLHIHRAMHAVIDRQKNHGIHFRVLAKALRMSGGDHIHAGTVVGKLEGERDITLGFVDLLREDYIEQDRTRGIYFSQDWVSLPGVLPVASGGIHVWHMPALTEIFGDDSVLQFGGGTLGHPWGNAPGAVANRVALEACVQARNEGRDLAREGNEIIREASKWSPELAAACEVWKEIKFEFPAMDTL.

Residue lysine 4 is modified to N6,N6,N6-trimethyllysine. The substrate site is built by asparagine 113 and threonine 163. Lysine 165 acts as the Proton acceptor in catalysis. Lysine 167 contributes to the substrate binding site. Mg(2+) is bound by residues lysine 191, aspartate 193, and glutamate 194. Lysine 191 bears the N6-carboxylysine mark. The active-site Proton acceptor is histidine 284. Substrate is bound by residues arginine 285, histidine 317, and serine 369.

It belongs to the RuBisCO large chain family. Type I subfamily. Heterohexadecamer of 8 large chains and 8 small chains. Mg(2+) serves as cofactor.

The protein localises to the plastid. It localises to the chloroplast. The catalysed reaction is 2 (2R)-3-phosphoglycerate + 2 H(+) = D-ribulose 1,5-bisphosphate + CO2 + H2O. It carries out the reaction D-ribulose 1,5-bisphosphate + O2 = 2-phosphoglycolate + (2R)-3-phosphoglycerate + 2 H(+). RuBisCO catalyzes two reactions: the carboxylation of D-ribulose 1,5-bisphosphate, the primary event in carbon dioxide fixation, as well as the oxidative fragmentation of the pentose substrate in the photorespiration process. Both reactions occur simultaneously and in competition at the same active site. This is Ribulose bisphosphate carboxylase large chain from Sarracenia flava (Yellow pitcher plant).